The chain runs to 322 residues: Probable cardiolipin synthase (CMP-forming) (322 aa).

3 helical membrane-spanning segments follow: residues 143–163 (IGYV…AFAG), 199–219 (LVIS…IVVF), and 289–309 (LQGL…SYVM).

It belongs to the CDP-alcohol phosphatidyltransferase class-I family.

It is found in the mitochondrion inner membrane. The catalysed reaction is a CDP-1,2-diacyl-sn-glycerol + a 1,2-diacyl-sn-glycero-3-phospho-(1'-sn-glycerol) = a cardiolipin + CMP + H(+). Its function is as follows. Catalyzes the synthesis of cardiolipin (CL) (diphosphatidylglycerol) by specifically transferring a phosphatidyl group from CDP-diacylglycerol to phosphatidylglycerol (PG). CL is a key phospholipid in mitochondrial membranes and plays important roles in maintaining the functional integrity and dynamics of mitochondria under both optimal and stress conditions. The protein is Probable cardiolipin synthase (CMP-forming) (CLS) of Drosophila melanogaster (Fruit fly).